The chain runs to 253 residues: Claudin domain-containing protein 1 (253 aa).

The chain crosses the membrane as a helical span at residues 5–25 (FATAFVIACVLSLISTIYMAA). N-linked (GlcNAc...) asparagine glycans are attached at residues Asn-42 and Asn-72. 3 helical membrane passes run 141-161 (FLLP…GLCA), 175-195 (ILHL…VAGI), and 216-236 (FCLA…FIWA).

Belongs to the PMP-22/EMP/MP20 family. Widely distributed in the adult CNS with highest expression in the corpus callosum, caudate nucleus, cerebral cortex, medulla, putamen, spinal cord, substantia nigra and subthalamic nucleus. Weak expression was detected in the adult heart.

It localises to the cell junction. The protein localises to the tight junction. Its subcellular location is the cell membrane. Its function is as follows. Plays a role in negatively regulating the permeability of cells to small molecules. This is Claudin domain-containing protein 1 (CLDND1) from Homo sapiens (Human).